The sequence spans 43 residues: MYWIEWIENGEKKNIVAEGWIEWAAILEDLYQKRFEYVEWKRL.

This Bacillus subtilis (strain 168) protein is SPbeta prophage-derived uncharacterized protein YopG (yopG).